The following is a 388-amino-acid chain: Succinate--CoA ligase [ADP-forming] subunit beta (388 aa).

Residues 9–244 enclose the ATP-grasp domain; sequence KSLFAEYGLP…PSQDDAREAH (236 aa). Residues Lys-46, 53-55, Glu-99, Thr-102, and Glu-107 each bind ATP; that span reads GRG. The Mg(2+) site is built by Asn-199 and Asp-213. Substrate-binding positions include Asn-264 and 321–323; that span reads GIV.

It belongs to the succinate/malate CoA ligase beta subunit family. Heterotetramer of two alpha and two beta subunits. Mg(2+) is required as a cofactor.

The catalysed reaction is succinate + ATP + CoA = succinyl-CoA + ADP + phosphate. It catalyses the reaction GTP + succinate + CoA = succinyl-CoA + GDP + phosphate. Its pathway is carbohydrate metabolism; tricarboxylic acid cycle; succinate from succinyl-CoA (ligase route): step 1/1. Succinyl-CoA synthetase functions in the citric acid cycle (TCA), coupling the hydrolysis of succinyl-CoA to the synthesis of either ATP or GTP and thus represents the only step of substrate-level phosphorylation in the TCA. The beta subunit provides nucleotide specificity of the enzyme and binds the substrate succinate, while the binding sites for coenzyme A and phosphate are found in the alpha subunit. This is Succinate--CoA ligase [ADP-forming] subunit beta from Shewanella woodyi (strain ATCC 51908 / MS32).